The following is a 187-amino-acid chain: Protein GrpE (187 aa).

The segment at 1–26 (MNDLKNAENGPDEADTPQGAPSQEPD) is disordered.

This sequence belongs to the GrpE family. Homodimer.

The protein localises to the cytoplasm. Its function is as follows. Participates actively in the response to hyperosmotic and heat shock by preventing the aggregation of stress-denatured proteins, in association with DnaK and GrpE. It is the nucleotide exchange factor for DnaK and may function as a thermosensor. Unfolded proteins bind initially to DnaJ; upon interaction with the DnaJ-bound protein, DnaK hydrolyzes its bound ATP, resulting in the formation of a stable complex. GrpE releases ADP from DnaK; ATP binding to DnaK triggers the release of the substrate protein, thus completing the reaction cycle. Several rounds of ATP-dependent interactions between DnaJ, DnaK and GrpE are required for fully efficient folding. This Methylocella silvestris (strain DSM 15510 / CIP 108128 / LMG 27833 / NCIMB 13906 / BL2) protein is Protein GrpE.